Here is a 438-residue protein sequence, read N- to C-terminus: Phosphoribosylamine--glycine ligase (438 aa).

Residues 108–316 form the ATP-grasp domain; the sequence is REFMERNDIP…LVEIAEGIVK (209 aa). 135–194 serves as a coordination point for ATP; that stretch reads IDEYGKPVVVKPLGLTGGKGVKVVGYQLKDNEEAKEYAEYLIKKDGKVLIEERTDGVEFT. Residues Gln274, Glu286, and Asn288 each coordinate Mg(2+). Mn(2+)-binding residues include Gln274, Glu286, and Asn288.

It belongs to the GARS family. Requires Mg(2+) as cofactor. The cofactor is Mn(2+).

The catalysed reaction is 5-phospho-beta-D-ribosylamine + glycine + ATP = N(1)-(5-phospho-beta-D-ribosyl)glycinamide + ADP + phosphate + H(+). The protein operates within purine metabolism; IMP biosynthesis via de novo pathway; N(1)-(5-phospho-D-ribosyl)glycinamide from 5-phospho-alpha-D-ribose 1-diphosphate: step 2/2. The sequence is that of Phosphoribosylamine--glycine ligase from Pyrococcus abyssi (strain GE5 / Orsay).